We begin with the raw amino-acid sequence, 254 residues long: Ribonuclease HII (254 aa).

One can recognise an RNase H type-2 domain in the interval 70–254 (QAIAGIDEVG…TFEPVKSMLG (185 aa)). Positions 76, 77, and 168 each coordinate a divalent metal cation.

This sequence belongs to the RNase HII family. Requires Mn(2+) as cofactor. The cofactor is Mg(2+).

Its subcellular location is the cytoplasm. The catalysed reaction is Endonucleolytic cleavage to 5'-phosphomonoester.. Endonuclease that specifically degrades the RNA of RNA-DNA hybrids. The polypeptide is Ribonuclease HII (Streptococcus gordonii (strain Challis / ATCC 35105 / BCRC 15272 / CH1 / DL1 / V288)).